The sequence spans 178 residues: Probable chorismate pyruvate-lyase (178 aa).

3 residues coordinate substrate: Arg73, Leu111, and Glu163.

This sequence belongs to the UbiC family.

Its subcellular location is the cytoplasm. The catalysed reaction is chorismate = 4-hydroxybenzoate + pyruvate. The protein operates within cofactor biosynthesis; ubiquinone biosynthesis. In terms of biological role, removes the pyruvyl group from chorismate, with concomitant aromatization of the ring, to provide 4-hydroxybenzoate (4HB) for the ubiquinone pathway. This chain is Probable chorismate pyruvate-lyase, found in Pseudomonas aeruginosa (strain UCBPP-PA14).